Here is a 461-residue protein sequence, read N- to C-terminus: UPF0053 protein YhdT (461 aa).

In terms of domain architecture, CNNM transmembrane spans 1–202; that stretch reads MDDIDSLILI…LKNGEINPSE (202 aa). The next 3 membrane-spanning stretches (helical) occupy residues 8–28, 103–123, and 137–157; these read ILIG…FAIV, VSFA…GELA, and LLIA…IWIL. 2 consecutive CBS domains span residues 221 to 280 and 290 to 347; these read MIPR…MTEE and YVRP…IRDE.

It belongs to the UPF0053 family.

It is found in the cell membrane. The protein is UPF0053 protein YhdT (yhdT) of Bacillus subtilis (strain 168).